Consider the following 459-residue polypeptide: Bifunctional protein GlmU (459 aa).

The tract at residues 1–229 is pyrophosphorylase; the sequence is MSNFAIILAA…FDESLGVNDR (229 aa). Residues 8–11, K22, Q72, and 77–78 contribute to the UDP-N-acetyl-alpha-D-glucosamine site; these read LAAG and GT. D102 lines the Mg(2+) pocket. The UDP-N-acetyl-alpha-D-glucosamine site is built by G139, E154, N169, and N227. N227 is a binding site for Mg(2+). Residues 230-250 are linker; the sequence is VALATAESVMRRRINHKHMVN. The interval 251–459 is N-acetyltransferase; it reads GVSFVNPEAT…TRLPHHPKNQ (209 aa). The UDP-N-acetyl-alpha-D-glucosamine site is built by R332 and K350. The active-site Proton acceptor is H362. 2 residues coordinate UDP-N-acetyl-alpha-D-glucosamine: Y365 and N376. Acetyl-CoA is bound by residues A379, 385-386, S404, A422, and R439; that span reads NY.

This sequence in the N-terminal section; belongs to the N-acetylglucosamine-1-phosphate uridyltransferase family. It in the C-terminal section; belongs to the transferase hexapeptide repeat family. Homotrimer. Mg(2+) is required as a cofactor.

Its subcellular location is the cytoplasm. It catalyses the reaction alpha-D-glucosamine 1-phosphate + acetyl-CoA = N-acetyl-alpha-D-glucosamine 1-phosphate + CoA + H(+). The catalysed reaction is N-acetyl-alpha-D-glucosamine 1-phosphate + UTP + H(+) = UDP-N-acetyl-alpha-D-glucosamine + diphosphate. It participates in nucleotide-sugar biosynthesis; UDP-N-acetyl-alpha-D-glucosamine biosynthesis; N-acetyl-alpha-D-glucosamine 1-phosphate from alpha-D-glucosamine 6-phosphate (route II): step 2/2. The protein operates within nucleotide-sugar biosynthesis; UDP-N-acetyl-alpha-D-glucosamine biosynthesis; UDP-N-acetyl-alpha-D-glucosamine from N-acetyl-alpha-D-glucosamine 1-phosphate: step 1/1. Its pathway is bacterial outer membrane biogenesis; LPS lipid A biosynthesis. Its function is as follows. Catalyzes the last two sequential reactions in the de novo biosynthetic pathway for UDP-N-acetylglucosamine (UDP-GlcNAc). The C-terminal domain catalyzes the transfer of acetyl group from acetyl coenzyme A to glucosamine-1-phosphate (GlcN-1-P) to produce N-acetylglucosamine-1-phosphate (GlcNAc-1-P), which is converted into UDP-GlcNAc by the transfer of uridine 5-monophosphate (from uridine 5-triphosphate), a reaction catalyzed by the N-terminal domain. In Streptococcus pneumoniae (strain JJA), this protein is Bifunctional protein GlmU.